Consider the following 342-residue polypeptide: Endo-1,4-beta-xylanase A (342 aa).

The 332-residue stretch at 11–342 folds into the GH10 domain; sequence EMLNLSLAKT…KEALYRILRF (332 aa). The Proton donor role is filled by Glu-144. The Nucleophile role is filled by Glu-252.

Belongs to the glycosyl hydrolase 10 (cellulase F) family. Cytoplasmic xylanase subfamily.

It localises to the cytoplasm. The enzyme catalyses Endohydrolysis of (1-&gt;4)-beta-D-xylosidic linkages in xylans.. It functions in the pathway glycan degradation; xylan degradation. This Caldicellulosiruptor saccharolyticus (Caldocellum saccharolyticum) protein is Endo-1,4-beta-xylanase A (xynA).